The sequence spans 192 residues: Xanthine phosphoribosyltransferase (192 aa).

Positions 20 and 27 each coordinate xanthine. Residue 128–132 coordinates 5-phospho-alpha-D-ribose 1-diphosphate; sequence ANGDA. Xanthine is bound at residue Lys-156.

This sequence belongs to the purine/pyrimidine phosphoribosyltransferase family. Xpt subfamily. As to quaternary structure, homodimer.

Its subcellular location is the cytoplasm. The catalysed reaction is XMP + diphosphate = xanthine + 5-phospho-alpha-D-ribose 1-diphosphate. Its pathway is purine metabolism; XMP biosynthesis via salvage pathway; XMP from xanthine: step 1/1. In terms of biological role, converts the preformed base xanthine, a product of nucleic acid breakdown, to xanthosine 5'-monophosphate (XMP), so it can be reused for RNA or DNA synthesis. This is Xanthine phosphoribosyltransferase from Staphylococcus epidermidis (strain ATCC 35984 / DSM 28319 / BCRC 17069 / CCUG 31568 / BM 3577 / RP62A).